We begin with the raw amino-acid sequence, 133 residues long: Large ribosomal subunit protein uL15 (133 aa).

The interval 1-64 is disordered; that stretch reads MGLENLKPAK…QPLQRRLPKI (64 aa).

Belongs to the universal ribosomal protein uL15 family. As to quaternary structure, part of the 50S ribosomal subunit.

Binds to the 23S rRNA. This chain is Large ribosomal subunit protein uL15, found in Helicobacter pylori (strain G27).